We begin with the raw amino-acid sequence, 99 residues long: Acylphosphatase (99 aa).

Positions 5–97 constitute an Acylphosphatase-like domain; that stretch reads VRQVTVQGRV…RPGERFSTLP (93 aa). Active-site residues include arginine 20 and asparagine 38.

The protein belongs to the acylphosphatase family.

It carries out the reaction an acyl phosphate + H2O = a carboxylate + phosphate + H(+). This chain is Acylphosphatase (acyP), found in Rhodopseudomonas palustris (strain BisB18).